Reading from the N-terminus, the 260-residue chain is Centromere protein K (260 aa).

Positions 84-173 form a coiled coil; sequence EEELQKVKKE…KKLMNALGEF (90 aa).

Belongs to the CENP-K/MCM22 family. In terms of assembly, component of the CENPA-HI complex, at least composed of CENPH, CENPI, CENPK, CENPL, CENPM, CENPO and CENPP.

The protein localises to the nucleus. The protein resides in the chromosome. It is found in the centromere. It localises to the kinetochore. Functionally, component of the CENPA-HI complex, a centromeric complex involved in assembly of kinetochore proteins, mitotic progression and chromosome segregation. The sequence is that of Centromere protein K (CENPK) from Gallus gallus (Chicken).